The sequence spans 67 residues: MPQRFSRVLIPQPRSRFVRLRCPDCGNEQVTFSHAAMVVRCLVCGRVLAQPTGGKAIFAGHVVKVLE.

Positions 22, 25, 41, and 44 each coordinate Zn(2+). The C4-type zinc finger occupies Cys22 to Cys44.

This sequence belongs to the eukaryotic ribosomal protein eS27 family. As to quaternary structure, part of the 30S ribosomal subunit. Zn(2+) is required as a cofactor.

In Pyrobaculum calidifontis (strain DSM 21063 / JCM 11548 / VA1), this protein is Small ribosomal subunit protein eS27.